The primary structure comprises 370 residues: Peptidyl-prolyl cis-trans isomerase D (370 aa).

Ser5 carries the phosphoserine modification. One can recognise a PPIase cyclophilin-type domain in the interval 19–183 (FFDVDIGGER…KLCVIAECGE (165 aa)). Lys171 carries the N6-acetyllysine modification. The chaperone activity stretch occupies residues 185–215 (KEGDDWGIFPKDGSGDSHPDFPEDADIDLKD). Ser198 carries the phosphoserine modification. The interaction with HSP90AB1 stretch occupies residues 214–370 (KDVDKILLIS…EKAVYAKMFA (157 aa)). TPR repeat units follow at residues 223–256 (SEDL…VDSS), 273–306 (LSCV…DPSN), and 307–340 (TKAL…APGD).

The protein belongs to the cyclophilin-type PPIase family. PPIase D subfamily. As to quaternary structure, identified in ESR1 or NR3C1/GCR steroid receptor-chaperone complexes. Found in HSP90 chaperone complexes with kinase clients LCK or EIF2AK1. Two monomers associate with one HSP90 homodimer. Interacts with HSP90AA1. Interacts with HSP90AB1; PPID and FKBP4 compete for binding to HSP90AB1 and the interaction is mutually exclusive with the PPID:HSPA8 interaction. Interacts with HSPA8; PPID and STIP1 but not FKBP4 compete for binding to HSPA8 and the interaction is mutually exclusive with the PPID:HSP90AB1 interaction. Interacts with S100A1 and S100A2; the interactions dissociate the PPID:HSP90AA1 interaction. Interacts with S100A6. Interacts with MYB, ILF2, XRCC6, RACK1 and RPS3. Interacts with cytoplasmic dynein 1 intermediate chain (DYNC1I1 or DYNC1I2).

The protein localises to the cytoplasm. Its subcellular location is the nucleus. It localises to the nucleolus. It is found in the nucleoplasm. It carries out the reaction [protein]-peptidylproline (omega=180) = [protein]-peptidylproline (omega=0). Less sensitive to inhibition by cyclosporin A than is CYP-18. PPIase that catalyzes the cis-trans isomerization of proline imidic peptide bonds in oligopeptides and may therefore assist protein folding. Proposed to act as a co-chaperone in HSP90 complexes such as in unligated steroid receptors heterocomplexes. Different co-chaperones seem to compete for association with HSP90 thus establishing distinct HSP90-co-chaperone-receptor complexes with the potential to exert tissue-specific receptor activity control. May have a preference for estrogen receptor complexes and is not found in glucocorticoid receptor complexes. May be involved in cytoplasmic dynein-dependent movement of the receptor from the cytoplasm to the nucleus. May regulate MYB by inhibiting its DNA-binding activity. Involved in regulation of AHR signaling by promoting the formation of the AHR:ARNT dimer; the function is independent of HSP90 but requires the chaperone activity region. Involved in regulation of UV radiation-induced apoptosis. The polypeptide is Peptidyl-prolyl cis-trans isomerase D (Mus musculus (Mouse)).